The chain runs to 415 residues: uncharacterized protein (415 aa).

The TRAM domain maps to 1 to 52 (MQDLTINAIGAQGDGLARTADGKPAFVPLTLPGEVVRAKMDGARGEVVEILA). 4 residues coordinate [4Fe-4S] cluster: Cys62, Cys68, Cys71, and Cys147. Positions 252, 279, 299, and 347 each coordinate S-adenosyl-L-methionine. The Nucleophile role is filled by Cys373.

It belongs to the class I-like SAM-binding methyltransferase superfamily. RNA M5U methyltransferase family.

This is an uncharacterized protein from Caulobacter vibrioides (strain ATCC 19089 / CIP 103742 / CB 15) (Caulobacter crescentus).